The sequence spans 220 residues: 2-hydroxy-3-keto-5-methylthiopentenyl-1-phosphate phosphatase (220 aa).

The protein belongs to the HAD-like hydrolase superfamily. MtnX family.

The catalysed reaction is 2-hydroxy-5-methylsulfanyl-3-oxopent-1-enyl phosphate + H2O = 1,2-dihydroxy-5-(methylsulfanyl)pent-1-en-3-one + phosphate. The protein operates within amino-acid biosynthesis; L-methionine biosynthesis via salvage pathway; L-methionine from S-methyl-5-thio-alpha-D-ribose 1-phosphate: step 4/6. In terms of biological role, dephosphorylates 2-hydroxy-3-keto-5-methylthiopentenyl-1-phosphate (HK-MTPenyl-1-P) yielding 1,2-dihydroxy-3-keto-5-methylthiopentene (DHK-MTPene). This Geobacillus thermodenitrificans (strain NG80-2) protein is 2-hydroxy-3-keto-5-methylthiopentenyl-1-phosphate phosphatase.